Reading from the N-terminus, the 317-residue chain is Ribosomal RNA small subunit methyltransferase H (317 aa).

S-adenosyl-L-methionine is bound by residues 37-39 (AGH), Asp56, Phe85, Asp106, and Gln113.

Belongs to the methyltransferase superfamily. RsmH family.

It is found in the cytoplasm. The catalysed reaction is cytidine(1402) in 16S rRNA + S-adenosyl-L-methionine = N(4)-methylcytidine(1402) in 16S rRNA + S-adenosyl-L-homocysteine + H(+). In terms of biological role, specifically methylates the N4 position of cytidine in position 1402 (C1402) of 16S rRNA. In Lactococcus lactis subsp. lactis (strain IL1403) (Streptococcus lactis), this protein is Ribosomal RNA small subunit methyltransferase H.